The sequence spans 203 residues: Histidine biosynthesis bifunctional protein HisIE (203 aa).

Residues 1-114 are phosphoribosyl-AMP cyclohydrolase; sequence MLTEQQRREL…FGDTAHQWLF (114 aa). The tract at residues 115 to 203 is phosphoribosyl-ATP pyrophosphohydrolase; it reads LYQLEQLLAE…VIENLRKRHQ (89 aa).

In the N-terminal section; belongs to the PRA-CH family. This sequence in the C-terminal section; belongs to the PRA-PH family.

It is found in the cytoplasm. It carries out the reaction 1-(5-phospho-beta-D-ribosyl)-ATP + H2O = 1-(5-phospho-beta-D-ribosyl)-5'-AMP + diphosphate + H(+). The catalysed reaction is 1-(5-phospho-beta-D-ribosyl)-5'-AMP + H2O = 1-(5-phospho-beta-D-ribosyl)-5-[(5-phospho-beta-D-ribosylamino)methylideneamino]imidazole-4-carboxamide. It functions in the pathway amino-acid biosynthesis; L-histidine biosynthesis; L-histidine from 5-phospho-alpha-D-ribose 1-diphosphate: step 2/9. Its pathway is amino-acid biosynthesis; L-histidine biosynthesis; L-histidine from 5-phospho-alpha-D-ribose 1-diphosphate: step 3/9. This chain is Histidine biosynthesis bifunctional protein HisIE, found in Shigella sonnei (strain Ss046).